A 456-amino-acid chain; its full sequence is Zinc finger C2HC domain-containing protein 1C (456 aa).

Disordered stretches follow at residues 16-46 (MLPHNTTEAPGPHSAKQDSYEQGDSSQQSLK) and 85-113 (YPHCTGISQQDPESDSQGQGNGLFYSSGP). 2 stretches are compositionally biased toward polar residues: residues 35-46 (YEQGDSSQQSLK) and 90-102 (GISQQDPESDSQG). The stretch at 211 to 265 (VQIRRLEAAGESLEEEIRRKQILLRGKLKKTEEELRRIQTQKEQAKENENGELQK) forms a coiled coil. The disordered stretch occupies residues 336–388 (NKIRDPVSEPSVEKFSPPSETPVGALQGSARNSSLSMAPDSSGSSGSIEEPQL). Positions 368–382 (SSLSMAPDSSGSSGS) are enriched in low complexity. Residues 387-416 (QLGECSHCGRKFLSFRLERHSNICSRMRGS) form a C2HC/C3H-type zinc finger. Zn(2+) contacts are provided by Cys391, Cys394, His406, and Cys410.

The protein belongs to the ZC2HC1 family. It depends on Zn(2+) as a cofactor.

The protein is Zinc finger C2HC domain-containing protein 1C (ZC2HC1C) of Homo sapiens (Human).